We begin with the raw amino-acid sequence, 455 residues long: Probable carboxypeptidase MCYG_07204 (455 aa).

The N-terminal stretch at 1 to 21 (MQKTYLLALLVSSLASVRSLA) is a signal peptide. N-linked (GlcNAc...) asparagine glycosylation is present at Asn93. Residue Asp170 coordinates Zn(2+). Glu202 (proton acceptor) is an active-site residue. Glu203 provides a ligand contact to Zn(2+). Asn390 carries an N-linked (GlcNAc...) asparagine glycan.

The protein belongs to the peptidase M20A family. Zn(2+) is required as a cofactor.

The protein resides in the secreted. The protein is Probable carboxypeptidase MCYG_07204 of Arthroderma otae (strain ATCC MYA-4605 / CBS 113480) (Microsporum canis).